Consider the following 879-residue polypeptide: Alanine--tRNA ligase (879 aa).

The Zn(2+) site is built by His-566, His-570, Cys-668, and His-672.

It belongs to the class-II aminoacyl-tRNA synthetase family. Zn(2+) is required as a cofactor.

Its subcellular location is the cytoplasm. The catalysed reaction is tRNA(Ala) + L-alanine + ATP = L-alanyl-tRNA(Ala) + AMP + diphosphate. Functionally, catalyzes the attachment of alanine to tRNA(Ala) in a two-step reaction: alanine is first activated by ATP to form Ala-AMP and then transferred to the acceptor end of tRNA(Ala). Also edits incorrectly charged Ser-tRNA(Ala) and Gly-tRNA(Ala) via its editing domain. The polypeptide is Alanine--tRNA ligase (Clostridium kluyveri (strain ATCC 8527 / DSM 555 / NBRC 12016 / NCIMB 10680 / K1)).